We begin with the raw amino-acid sequence, 452 residues long: Enolase (452 aa).

Q167 contributes to the (2R)-2-phosphoglycerate binding site. E209 serves as the catalytic Proton donor. 3 residues coordinate Mg(2+): D250, E307, and D334. Positions 359, 388, 389, and 410 each coordinate (2R)-2-phosphoglycerate. Residue K359 is the Proton acceptor of the active site.

It belongs to the enolase family. Requires Mg(2+) as cofactor.

Its subcellular location is the cytoplasm. The protein localises to the secreted. The protein resides in the cell surface. The enzyme catalyses (2R)-2-phosphoglycerate = phosphoenolpyruvate + H2O. Its pathway is carbohydrate degradation; glycolysis; pyruvate from D-glyceraldehyde 3-phosphate: step 4/5. In terms of biological role, catalyzes the reversible conversion of 2-phosphoglycerate (2-PG) into phosphoenolpyruvate (PEP). It is essential for the degradation of carbohydrates via glycolysis. The chain is Enolase from Mesomycoplasma hyopneumoniae (strain 232) (Mycoplasma hyopneumoniae).